We begin with the raw amino-acid sequence, 617 residues long: Chaperone protein DnaK (617 aa).

At threonine 175 the chain carries Phosphothreonine; by autocatalysis. The segment covering 578–592 has biased composition (low complexity); that stretch reads AGAEAQQGAQGTQGA. Residues 578-617 form a disordered region; that stretch reads AGAEAQQGAQGTQGADMGGNAQGKDDDNVVDADFKVEDDK. Over residues 600–617 the composition is skewed to basic and acidic residues; the sequence is GKDDDNVVDADFKVEDDK.

Belongs to the heat shock protein 70 family.

Acts as a chaperone. This Clostridium novyi (strain NT) protein is Chaperone protein DnaK.